Here is an 833-residue protein sequence, read N- to C-terminus: cGMP-specific 3',5'-cyclic phosphodiesterase (833 aa).

At S60 the chain carries Phosphoserine. The segment at 82-101 (FLSDSGKKEQMPLTSPRFDS) is disordered. GAF domains follow at residues 122–272 (DVTA…GIVL) and 304–461 (SLEV…GLGI). Residues 494–818 (ETRELQALAA…QKWQALADQQ (325 aa)) enclose the PDEase domain. Residue H571 is the Proton donor of the active site. Zn(2+)-binding residues include H575, H611, D612, and D722. D612 provides a ligand contact to Mg(2+). Q775 lines the 3',5'-cyclic GMP pocket.

The protein belongs to the cyclic nucleotide phosphodiesterase family. Zn(2+) serves as cofactor. It depends on Mg(2+) as a cofactor. Phosphorylation is regulated by binding of cGMP to the two allosteric sites. Phosphorylation by PRKG1 leads to its activation.

The catalysed reaction is 3',5'-cyclic GMP + H2O = GMP + H(+). It functions in the pathway purine metabolism; 3',5'-cyclic GMP degradation; GMP from 3',5'-cyclic GMP: step 1/1. Functionally, plays a role in signal transduction by regulating the intracellular concentration of cyclic nucleotides. This phosphodiesterase catalyzes the specific hydrolysis of cGMP to 5'-GMP. Specifically regulates nitric-oxide-generated cGMP. The protein is cGMP-specific 3',5'-cyclic phosphodiesterase (Pde5a) of Rattus norvegicus (Rat).